Consider the following 318-residue polypeptide: ZAR1-like protein (318 aa).

The tract at residues 149–211 is disordered; sequence LSDPPEAGQP…PVDSSQPLGR (63 aa). Residues 155 to 169 show a composition bias toward pro residues; the sequence is AGQPPPPLPPPSPPP. The segment at 219-304 adopts a 3CxxC-type zinc-finger fold; sequence PKYGYFHCKD…QELCGRCKDK (86 aa).

This sequence belongs to the ZAR1 family. As to quaternary structure, interacts with YBX2.

The protein localises to the cytoplasm. The protein resides in the cytoplasmic ribonucleoprotein granule. Functionally, mRNA-binding protein required for maternal mRNA storage, translation and degradation during oocyte maturation. Probably promotes formation of some phase-separated membraneless compartment that stores maternal mRNAs in oocytes: acts by undergoing liquid-liquid phase separation upon binding to maternal mRNAs. Binds to the 3'-UTR of maternal mRNAs, inhibiting their translation. The protein is ZAR1-like protein (ZAR1L) of Bos taurus (Bovine).